The sequence spans 271 residues: Thioredoxin-related transmembrane protein 2 homolog (271 aa).

The first 28 residues, 1-28 (MTWKKQMALLAKPYYWVNILLAISYLLA), serve as a signal peptide directing secretion. Topologically, residues 29–102 (KKTQFICTRL…AILWAYADFR (74 aa)) are extracellular. The chain crosses the membrane as a helical span at residues 103–123 (YGLGFLLLCVLVGMVLPEPSY). One can recognise a Thioredoxin domain in the interval 112-262 (VLVGMVLPEP…YKEAIERLPI (151 aa)). Residues 124–271 (RGPEHITYFR…IAPKEAKKVQ (148 aa)) lie on the Cytoplasmic side of the membrane. The Di-lysine motif signature appears at 268–271 (KKVQ).

The protein resides in the membrane. This is Thioredoxin-related transmembrane protein 2 homolog from Drosophila melanogaster (Fruit fly).